Consider the following 153-residue polypeptide: MTHDNKLQVEAIKRGTVIDHIPAQIGFKLLSLFKLTETDQRITIGLNLPSGEMGRKDLIKIENTFLSEDQVDQLALYAPQATVNRIDNYEVVGKSRPSLPERIDNVLVCPNSNCISHAEPVSSSFAVLKRANDIALKCKYCEKEFSHNVVLAN.

Zn(2+) is bound by residues cysteine 109, cysteine 114, cysteine 138, and cysteine 141.

It belongs to the PyrI family. In terms of assembly, contains catalytic and regulatory chains. Requires Zn(2+) as cofactor.

In terms of biological role, involved in allosteric regulation of aspartate carbamoyltransferase. The protein is Aspartate carbamoyltransferase regulatory chain of Shigella dysenteriae serotype 1 (strain Sd197).